We begin with the raw amino-acid sequence, 379 residues long: Homoserine O-succinyltransferase (379 aa).

An AB hydrolase-1 domain is found at 51 to 360 (NAVLICHALS…DAPQGHDAFL (310 aa)). S157 (nucleophile) is an active-site residue. Residue R227 participates in substrate binding. Active-site residues include D323 and H356. D357 contacts substrate.

It belongs to the AB hydrolase superfamily. MetX family. In terms of assembly, homodimer.

It is found in the cytoplasm. It catalyses the reaction L-homoserine + succinyl-CoA = O-succinyl-L-homoserine + CoA. It participates in amino-acid biosynthesis; L-methionine biosynthesis via de novo pathway; O-succinyl-L-homoserine from L-homoserine: step 1/1. Transfers a succinyl group from succinyl-CoA to L-homoserine, forming succinyl-L-homoserine. The protein is Homoserine O-succinyltransferase of Pseudomonas savastanoi pv. phaseolicola (strain 1448A / Race 6) (Pseudomonas syringae pv. phaseolicola (strain 1448A / Race 6)).